The primary structure comprises 95 residues: Cell division topological specificity factor (95 aa).

Belongs to the MinE family.

Functionally, prevents the cell division inhibition by proteins MinC and MinD at internal division sites while permitting inhibition at polar sites. This ensures cell division at the proper site by restricting the formation of a division septum at the midpoint of the long axis of the cell. In Trichodesmium erythraeum (strain IMS101), this protein is Cell division topological specificity factor.